Here is a 726-residue protein sequence, read N- to C-terminus: Catalase-peroxidase (726 aa).

Residues 91 to 214 constitute a cross-link (tryptophyl-tyrosyl-methioninium (Trp-Tyr) (with M-240)); that stretch reads WHAAGTYRIG…LAAVQMGLIY (124 aa). H92 acts as the Proton acceptor in catalysis. Positions 214–240 form a cross-link, tryptophyl-tyrosyl-methioninium (Tyr-Met) (with W-91); the sequence is YVNPEGPNGNPDPVAAAIDIRETFRRM. Residue H255 coordinates heme b. The interval 335 to 362 is disordered; sequence AHQWKPKGNAGAGTVPDPADPSKRRSPS.

The protein belongs to the peroxidase family. Peroxidase/catalase subfamily. In terms of assembly, homodimer or homotetramer. The cofactor is heme b. Post-translationally, formation of the three residue Trp-Tyr-Met cross-link is important for the catalase, but not the peroxidase activity of the enzyme.

It carries out the reaction H2O2 + AH2 = A + 2 H2O. It catalyses the reaction 2 H2O2 = O2 + 2 H2O. In terms of biological role, bifunctional enzyme with both catalase and broad-spectrum peroxidase activity. This Cupriavidus metallidurans (strain ATCC 43123 / DSM 2839 / NBRC 102507 / CH34) (Ralstonia metallidurans) protein is Catalase-peroxidase.